The following is a 450-amino-acid chain: Probable glycosidase CRR1 (450 aa).

The N-terminal stretch at 1 to 17 is a signal peptide; it reads MSKRIIQLILLSAFARA. Residues 67-347 enclose the GH16 domain; it reads SPESCVPVPA…WENAPDIKAH (281 aa). The Nucleophile role is filled by E225. Residue E229 is the Proton donor of the active site. The tract at residues 428–450 is disordered; sequence AQRQQHHRRSLPHVEAPPITNTM.

It belongs to the glycosyl hydrolase 16 family. CRR1 subfamily.

It localises to the spore wall. Its function is as follows. Spore specific glycosidase involved in spore wall assembly during sporulation. May be involved in copper import. The polypeptide is Probable glycosidase CRR1 (CRR1) (Eremothecium gossypii (strain ATCC 10895 / CBS 109.51 / FGSC 9923 / NRRL Y-1056) (Yeast)).